A 252-amino-acid polypeptide reads, in one-letter code: 3-deoxy-manno-octulosonate cytidylyltransferase (252 aa).

The protein belongs to the KdsB family.

It is found in the cytoplasm. The catalysed reaction is 3-deoxy-alpha-D-manno-oct-2-ulosonate + CTP = CMP-3-deoxy-beta-D-manno-octulosonate + diphosphate. It participates in nucleotide-sugar biosynthesis; CMP-3-deoxy-D-manno-octulosonate biosynthesis; CMP-3-deoxy-D-manno-octulosonate from 3-deoxy-D-manno-octulosonate and CTP: step 1/1. The protein operates within bacterial outer membrane biogenesis; lipopolysaccharide biosynthesis. Activates KDO (a required 8-carbon sugar) for incorporation into bacterial lipopolysaccharide in Gram-negative bacteria. The chain is 3-deoxy-manno-octulosonate cytidylyltransferase from Xylella fastidiosa (strain Temecula1 / ATCC 700964).